The primary structure comprises 233 residues: Uracil-DNA glycosylase (233 aa).

The Proton acceptor role is filled by aspartate 70.

It belongs to the uracil-DNA glycosylase (UDG) superfamily. UNG family.

The protein resides in the cytoplasm. The catalysed reaction is Hydrolyzes single-stranded DNA or mismatched double-stranded DNA and polynucleotides, releasing free uracil.. Functionally, excises uracil residues from the DNA which can arise as a result of misincorporation of dUMP residues by DNA polymerase or due to deamination of cytosine. The protein is Uracil-DNA glycosylase of Helicobacter pylori (strain P12).